Consider the following 259-residue polypeptide: Phosphate import ATP-binding protein PstB (259 aa).

Residues 5 to 248 (IEVNDLNVYY…NIIFSNPSAQ (244 aa)) enclose the ABC transporter domain. ATP is bound at residue 37-44 (GPSGCGKS).

It belongs to the ABC transporter superfamily. Phosphate importer (TC 3.A.1.7) family. As to quaternary structure, the complex is composed of two ATP-binding proteins (PstB), two transmembrane proteins (PstC and PstA) and a solute-binding protein (PstS).

The protein localises to the cell membrane. The catalysed reaction is phosphate(out) + ATP + H2O = ADP + 2 phosphate(in) + H(+). Its function is as follows. Part of the ABC transporter complex PstSACB involved in phosphate import. Responsible for energy coupling to the transport system. The sequence is that of Phosphate import ATP-binding protein PstB from Leifsonia xyli subsp. xyli (strain CTCB07).